The sequence spans 549 residues: Glucose-6-phosphate isomerase (549 aa).

Residue glutamate 353 is the Proton donor of the active site. Residues histidine 384 and lysine 512 contribute to the active site.

The protein belongs to the GPI family.

The protein localises to the cytoplasm. It catalyses the reaction alpha-D-glucose 6-phosphate = beta-D-fructose 6-phosphate. It functions in the pathway carbohydrate biosynthesis; gluconeogenesis. The protein operates within carbohydrate degradation; glycolysis; D-glyceraldehyde 3-phosphate and glycerone phosphate from D-glucose: step 2/4. Its function is as follows. Catalyzes the reversible isomerization of glucose-6-phosphate to fructose-6-phosphate. This chain is Glucose-6-phosphate isomerase, found in Alteromonas mediterranea (strain DSM 17117 / CIP 110805 / LMG 28347 / Deep ecotype).